Reading from the N-terminus, the 510-residue chain is NAD(P)H-quinone oxidoreductase subunit 2 B, chloroplastic (510 aa).

13 helical membrane passes run 26 to 46 (LFDGSFIFPEGILIFGLILLL), 57 to 77 (IPWFYFISSISLVMSITALLF), 99 to 119 (IFQFLILLCSTLCIPLSVEYI), 124 to 144 (MAITEFLLFVLTATLGGMFLC), 149 to 169 (LITIFVAPECFSLCSYLLSGY), 183 to 203 (YLLMGGASSSILVHGFSWLYG), 227 to 247 (PGISIALIFITVGIGFKLSPA), 295 to 315 (WHPLLEILAILSMILGNLIAI), 323 to 342 (MLAYSSIGQIGYVIIGIIVG), 354 to 374 (YMLFYISMNLGTFACIVLFGL), 395 to 415 (ALSLALCLLSLGGLPPLAGFF), 418 to 438 (LHLFWCGWQAGLYFLVSIGLF), and 484 to 504 (MIVCVIASTIPGISMNPIIAI).

The protein belongs to the complex I subunit 2 family. In terms of assembly, NDH is composed of at least 16 different subunits, 5 of which are encoded in the nucleus.

The protein resides in the plastid. It localises to the chloroplast thylakoid membrane. It carries out the reaction a plastoquinone + NADH + (n+1) H(+)(in) = a plastoquinol + NAD(+) + n H(+)(out). The enzyme catalyses a plastoquinone + NADPH + (n+1) H(+)(in) = a plastoquinol + NADP(+) + n H(+)(out). Its function is as follows. NDH shuttles electrons from NAD(P)H:plastoquinone, via FMN and iron-sulfur (Fe-S) centers, to quinones in the photosynthetic chain and possibly in a chloroplast respiratory chain. The immediate electron acceptor for the enzyme in this species is believed to be plastoquinone. Couples the redox reaction to proton translocation, and thus conserves the redox energy in a proton gradient. This chain is NAD(P)H-quinone oxidoreductase subunit 2 B, chloroplastic, found in Oenothera argillicola (Appalachian evening primrose).